A 107-amino-acid chain; its full sequence is Replication initiation control protein YabA (107 aa).

Positions 81, 83, 97, and 100 each coordinate Zn(2+).

The protein belongs to the YabA family. In terms of assembly, homotetramer. Interacts with both DnaA and DnaN, acting as a bridge between these two proteins. It depends on Zn(2+) as a cofactor.

It localises to the cytoplasm. Its subcellular location is the nucleoid. Functionally, involved in control of chromosome replication initiation. Inhibits the cooperative binding of DnaA to the oriC region, thus negatively regulating initiation of chromosome replication. Inhibits the ability of DnaA-ATP to form a helix on DNA; does not disassemble preformed DnaA-DNA helices. Decreases the residence time of DnaA on the chromosome at its binding sites (oriC, replication forks and promoter-binding sites). Tethers DnaA to the replication machinery via the DNA polymerase beta sliding clamp subunit (dnaN). Associates with oriC and other DnaA targets on the chromosome in a DnaA-dependent manner. In Streptococcus pyogenes serotype M3 (strain ATCC BAA-595 / MGAS315), this protein is Replication initiation control protein YabA.